The chain runs to 400 residues: Tryptophan synthase beta chain (400 aa).

Lys-92 carries the post-translational modification N6-(pyridoxal phosphate)lysine.

It belongs to the TrpB family. In terms of assembly, tetramer of two alpha and two beta chains. Pyridoxal 5'-phosphate is required as a cofactor.

It catalyses the reaction (1S,2R)-1-C-(indol-3-yl)glycerol 3-phosphate + L-serine = D-glyceraldehyde 3-phosphate + L-tryptophan + H2O. It participates in amino-acid biosynthesis; L-tryptophan biosynthesis; L-tryptophan from chorismate: step 5/5. Functionally, the beta subunit is responsible for the synthesis of L-tryptophan from indole and L-serine. The chain is Tryptophan synthase beta chain from Neisseria meningitidis serogroup C (strain 053442).